Reading from the N-terminus, the 1237-residue chain is uncharacterized protein (1237 aa).

The 122-residue stretch at 591 to 712 (KDMLEIYSDL…IVLSKYTQWT (122 aa)) folds into the MHD1 domain. One can recognise a C2 domain in the interval 786 to 906 (LIEALDVAES…GDYLPREEWF (121 aa)). An MHD2 domain is found at 1014 to 1130 (EAAIYELLDY…KPTDFLLQEC (117 aa)).

This is an uncharacterized protein from Schizosaccharomyces pombe (strain 972 / ATCC 24843) (Fission yeast).